We begin with the raw amino-acid sequence, 116 residues long: Mercuric transport protein MerT (116 aa).

Helical transmembrane passes span 16–36 and 46–66; these read LAAILASACCLGPLVLIALGF and VLEPYRPIFIGAALVALFFAW. Residues Cys24 and Cys25 each contribute to the Hg(2+) site. Hg(2+) is bound by residues Cys76 and Cys82. A helical transmembrane segment spans residues 94-114; the sequence is IFWVVAALVLVALGFPYVMPF.

Belongs to the MerT family.

The protein localises to the cell inner membrane. In terms of biological role, involved in mercury resistance. Probably transfers a mercuric ion from the periplasmic Hg(2+)-binding protein MerP to the cytoplasmic mercuric reductase MerA. In Serratia marcescens, this protein is Mercuric transport protein MerT.